The following is a 256-amino-acid chain: Ribonuclease T2 (256 aa).

A signal peptide spans 1–24 (MRPAALRGALLGCLCLALLCLGGA). A disulfide bond links Cys48 and Cys55. Residue His65 is part of the active site. 3 disulfides stabilise this stretch: Cys75/Cys121, Cys184/Cys241, and Cys202/Cys213. Asn76 and Asn106 each carry an N-linked (GlcNAc...) asparagine glycan. Active-site residues include Glu114 and His118. N-linked (GlcNAc...) asparagine glycosylation occurs at Asn212.

It belongs to the RNase T2 family. As to expression, ubiquitous. Higher expression levels observed in the temporal lobe and fetal brain.

It localises to the secreted. The protein localises to the lysosome lumen. The protein resides in the endoplasmic reticulum lumen. It is found in the mitochondrion intermembrane space. The catalysed reaction is a ribonucleotidyl-ribonucleotide-RNA + H2O = a 3'-end 3'-phospho-ribonucleotide-RNA + a 5'-end dephospho-ribonucleoside-RNA + H(+). It catalyses the reaction an adenylyl-uridine-RNA = a 3'-end 2',3'-cyclophospho-AMP-RNA + a 5'-end dephospho-uridine-RNA. The enzyme catalyses a guanylyl-uridine-RNA = a 3'-end 2',3'-cyclophospho-GMP-RNA + a 5'-end dephospho-uridine-RNA. Inhibited by Zn(2+) and Cu(2+). In terms of biological role, ribonuclease that plays an essential role in innate immune response by recognizing and degrading RNAs from microbial pathogens that are subsequently sensed by TLR8. Cleaves preferentially single-stranded RNA molecules between purine and uridine residues, which critically contributes to the supply of catabolic uridine and the generation of purine-2',3'-cyclophosphate-terminated oligoribonucleotides. In turn, RNase T2 degradation products promote the RNA-dependent activation of TLR8. In plasmacytoid dendritic cells, it cooperates with PLD3 or PLD4 5'-&gt;3' exonucleases to process RNA fragments and release 2',3'-cyclic guanosine monophosphate (2',3'-cGMP), a potent stimulatory ligand for TLR7. Also plays a key role in degradation of mitochondrial RNA and processing of non-coding RNA imported from the cytosol into mitochondria. Participates as well in degradation of mitochondrion-associated cytosolic rRNAs. This Homo sapiens (Human) protein is Ribonuclease T2 (RNASET2).